Reading from the N-terminus, the 1117-residue chain is A disintegrin and metalloproteinase with thrombospondin motifs 6 (1117 aa).

A signal peptide spans 1–21 (MEILWKTLTWILSLIMASSEF). A propeptide spanning residues 22 to 244 (HSDHRLSYSS…NTHIHHRQKR (223 aa)) is cleaved from the precursor. N-linked (GlcNAc...) asparagine glycosylation is found at Asn-99, Asn-172, Asn-222, and Asn-234. A Peptidase M12B domain is found at 250–468 (RFVETLVVAD…GRGTCLDNEP (219 aa)). 11 disulfides stabilise this stretch: Cys-326-Cys-387, Cys-362-Cys-369, Cys-381-Cys-463, Cys-420-Cys-447, Cys-490-Cys-512, Cys-501-Cys-519, Cys-507-Cys-542, Cys-532-Cys-547, Cys-570-Cys-607, Cys-574-Cys-612, and Cys-585-Cys-597. His-403 serves as a coordination point for Zn(2+). Glu-404 is a catalytic residue. The Zn(2+) site is built by His-407 and His-413. The Disintegrin domain occupies 495-557 (GATSRQCKYG…VPFGTWPQSI (63 aa)). The TSP type-1 1 domain maps to 558–613 (DGGWGPWSLWGECSRTCGGGVSSSLRHCDSPAPSGGGKYCLGERKRYRSCNTDPCP). Residues 717–843 (DAIEGFFNDS…GSGDNEVGFT (127 aa)) are spacer. The N-linked (GlcNAc...) asparagine glycan is linked to Asn-724. TSP type-1 domains are found at residues 840–900 (VGFT…EPCP), 902–960 (EWFI…QSCP), 962–1007 (QWVA…SKPP), and 1018–1073 (PPPR…SKCD). Disulfide bonds link Cys-911/Cys-954, Cys-915/Cys-959, and Cys-926/Cys-943. An N-linked (GlcNAc...) asparagine glycan is attached at Asn-956. One can recognise a PLAC domain in the interval 1079–1117 (NTEECKDVNKVAYCPLVLKFKFCSRAYFRQMCCKTCQGH).

Zn(2+) serves as cofactor. Post-translationally, the precursor is cleaved by a furin endopeptidase. Glycosylated. Can be O-fucosylated by POFUT2 on a serine or a threonine residue found within the consensus sequence C1-X(2)-(S/T)-C2-G of the TSP type-1 repeat domains where C1 and C2 are the first and second cysteine residue of the repeat, respectively. Fucosylated repeats can then be further glycosylated by the addition of a beta-1,3-glucose residue by the glucosyltransferase, B3GALTL. Fucosylation mediates the efficient secretion of ADAMTS family members. Can also be C-glycosylated with one or two mannose molecules on tryptophan residues within the consensus sequence W-X-X-W of the TPRs, and N-glycosylated. These other glycosylations can also facilitate secretion. As to expression, expressed at low levels in placenta and barely detectable in a number of other tissues.

The protein localises to the secreted. It localises to the extracellular space. Its subcellular location is the extracellular matrix. The polypeptide is A disintegrin and metalloproteinase with thrombospondin motifs 6 (ADAMTS6) (Homo sapiens (Human)).